A 333-amino-acid chain; its full sequence is Fructose-1,6-bisphosphatase class 1 1 (333 aa).

Mg(2+)-binding residues include glutamate 81, aspartate 100, leucine 102, and aspartate 103. Substrate-binding positions include aspartate 103 to serine 106 and asparagine 191. Glutamate 263 contributes to the Mg(2+) binding site.

This sequence belongs to the FBPase class 1 family. In terms of assembly, homotetramer. Requires Mg(2+) as cofactor.

It localises to the cytoplasm. The catalysed reaction is beta-D-fructose 1,6-bisphosphate + H2O = beta-D-fructose 6-phosphate + phosphate. It functions in the pathway carbohydrate biosynthesis; Calvin cycle. This chain is Fructose-1,6-bisphosphatase class 1 1, found in Cereibacter sphaeroides (strain ATCC 17023 / DSM 158 / JCM 6121 / CCUG 31486 / LMG 2827 / NBRC 12203 / NCIMB 8253 / ATH 2.4.1.) (Rhodobacter sphaeroides).